The chain runs to 78 residues: Omega-conotoxin-like 2 (78 aa).

The N-terminal stretch at 1–22 (MKLTCVVIVAVLLLTACQLITA) is a signal peptide. The propeptide occupies 23–42 (DDSRGTQKHRSLRSTTKVSK). Disulfide bonds link Cys-46–Cys-62, Cys-53–Cys-65, and Cys-61–Cys-72.

It belongs to the conotoxin O1 superfamily. In terms of tissue distribution, expressed by the venom duct.

The protein resides in the secreted. Its function is as follows. Omega-conotoxins act at presynaptic membranes, they bind and block voltage-gated calcium channels (Cav). This chain is Omega-conotoxin-like 2, found in Conus striatus (Striated cone).